The primary structure comprises 451 residues: Uronate isomerase (451 aa).

Belongs to the metallo-dependent hydrolases superfamily. Uronate isomerase family.

It carries out the reaction D-glucuronate = D-fructuronate. The catalysed reaction is aldehydo-D-galacturonate = keto-D-tagaturonate. It functions in the pathway carbohydrate metabolism; pentose and glucuronate interconversion. The chain is Uronate isomerase from Thermotoga petrophila (strain ATCC BAA-488 / DSM 13995 / JCM 10881 / RKU-1).